Reading from the N-terminus, the 320-residue chain is Malate dehydrogenase (320 aa).

Residues 10–15 (GAGQIG) and aspartate 34 each bind NAD(+). Substrate-binding residues include arginine 83 and arginine 89. NAD(+) contacts are provided by residues asparagine 96 and 119 to 121 (ITN). Substrate is bound by residues asparagine 121 and arginine 152. Histidine 176 (proton acceptor) is an active-site residue.

It belongs to the LDH/MDH superfamily. MDH type 3 family.

It catalyses the reaction (S)-malate + NAD(+) = oxaloacetate + NADH + H(+). Functionally, catalyzes the reversible oxidation of malate to oxaloacetate. In Cereibacter sphaeroides (strain ATCC 17029 / ATH 2.4.9) (Rhodobacter sphaeroides), this protein is Malate dehydrogenase.